Consider the following 479-residue polypeptide: U3 snoRNP-associated protein-like EMB2271 (479 aa).

A disordered region spans residues 1-73 (MKLEKKKGIG…AHETVGEKRK (73 aa)). Positions 8–17 (GIGAKRRGKK) are enriched in basic residues. Residues 18–38 (SSIDHDPFLEEETEKRRKFNY) show a composition bias toward basic and acidic residues. Residues 39–51 (DDDDDIESVESEE) show a composition bias toward acidic residues. Residues 52–73 (EGKVGEEVEDEFAHETVGEKRK) show a composition bias toward basic and acidic residues. WD repeat units lie at residues 143-182 (KHQH…SDEY), 204-243 (RHNK…HVQA), 246-285 (GHCG…YIES), 288-326 (GHQS…RLIY), 328-366 (ASES…PVFI), 386-425 (PACS…SAIQ), and 431-471 (PLPG…QNGV).

The protein belongs to the WD repeat RRP9 family.

It is found in the nucleus. Its subcellular location is the nucleolus. Functionally, component of a nucleolar small nuclear ribonucleoprotein particle (snoRNP) thought to participate in the processing and modification of pre-ribosomal RNA. Essential for embryogenesis. May function during late embryogenesis. The protein is U3 snoRNP-associated protein-like EMB2271 of Arabidopsis thaliana (Mouse-ear cress).